The chain runs to 1079 residues: Translation initiation factor IF-2 (1079 aa).

3 stretches are compositionally biased toward basic and acidic residues: residues 52-65 (VQAQ…KEGN), 75-90 (RDGD…KAPE), and 102-134 (APER…KEPQ). Residues 52–488 (VQAQRDGGAR…RGKKDVRPAA (437 aa)) form a disordered region. Low complexity predominate over residues 150–184 (APVAKVVEAAPAETPAPEAPAVKATVTAEAAPAKT). Residues 185–194 (VEPESERPQA) are compositionally biased toward basic and acidic residues. A compositionally biased stretch (low complexity) spans 276-291 (AAVAQQQMQQQAAQQQ). Over residues 306–327 (GGYRPEGQREGGYRPEGQREGG) the composition is skewed to basic and acidic residues. 2 stretches are compositionally biased toward low complexity: residues 348–370 (EGGY…GPRP) and 380–398 (PGAP…APRP). Residues 419–429 (PRPGGFGGAPG) show a composition bias toward gly residues. A compositionally biased stretch (basic and acidic residues) spans 461 to 471 (PRGRSDDDVMR). Basic residues predominate over residues 473-482 (PRGRGKRGKK). Positions 578–745 (TRPPVVTIMG…LIAIQAEILE (168 aa)) constitute a tr-type G domain. The interval 587 to 594 (GHVDHGKT) is G1. Residue 587 to 594 (GHVDHGKT) participates in GTP binding. Residues 612–616 (GITQH) form a G2 region. The tract at residues 633-636 (DTPG) is G3. Residues 633–637 (DTPGH) and 687–690 (NKMD) each bind GTP. The segment at 687–690 (NKMD) is G4. Positions 723 to 725 (SAK) are G5.

This sequence belongs to the TRAFAC class translation factor GTPase superfamily. Classic translation factor GTPase family. IF-2 subfamily.

It localises to the cytoplasm. One of the essential components for the initiation of protein synthesis. Protects formylmethionyl-tRNA from spontaneous hydrolysis and promotes its binding to the 30S ribosomal subunits. Also involved in the hydrolysis of GTP during the formation of the 70S ribosomal complex. The sequence is that of Translation initiation factor IF-2 from Nitratidesulfovibrio vulgaris (strain ATCC 29579 / DSM 644 / CCUG 34227 / NCIMB 8303 / VKM B-1760 / Hildenborough) (Desulfovibrio vulgaris).